Consider the following 399-residue polypeptide: Insertion element IS900 uncharacterized 42 kDa protein (399 aa).

This sequence belongs to the transposase IS1111A/IS1328/IS1533 family.

This chain is Insertion element IS900 uncharacterized 42 kDa protein, found in Mycobacterium paratuberculosis.